We begin with the raw amino-acid sequence, 473 residues long: MTQDSALLQAPEAIPSESLRDGSNSRKVFIKTYGCQMNVYDSMRMSDALARDGYEPTEDMEVADLVLLNTCHIREKAAEKVYSALGRLREMKKKKAADGREMMIGVAGCVAQAEGEEILRRAPAVDVVIGPQTYHRLPEALRRAKQGQRVVDTEYAIEDKFEHLPIAESRRIRARGVTAFLTVQEGCDKFCTFCVVPYTRGSEVSRSVSQIVEEAEKLADSGVREITLLGQNVNAWHGAGSQGEAWSLGDLLYRLAEIPGLARLRYTTSHPRDMDDRLINAHRDLSALMPYLHLPVQSGSDRILKAMNRRHTAAEYLALIERIRTVRPDIALSGDFITGFPGETDEDFKDTLRLVEEVRYAQAFSFKYSTRPGTPGAELKDQVPEEIKAERLERLQMLLLKQQQEFAESCVGKEIDLLLEKPGRMPEQLIGRSPWLQSVNVDAKASQIGDIIKVRITGTGTNSLFAEHAEAAV.

Residues 1–21 (MTQDSALLQAPEAIPSESLRD) form a disordered region. The 121-residue stretch at 26-146 (RKVFIKTYGC…LPEALRRAKQ (121 aa)) folds into the MTTase N-terminal domain. Positions 35, 71, 109, 187, 191, and 194 each coordinate [4Fe-4S] cluster. A Radical SAM core domain is found at 173-405 (RARGVTAFLT…QMLLLKQQQE (233 aa)). A TRAM domain is found at 408–470 (ESCVGKEIDL…TNSLFAEHAE (63 aa)).

This sequence belongs to the methylthiotransferase family. MiaB subfamily. As to quaternary structure, monomer. It depends on [4Fe-4S] cluster as a cofactor.

Its subcellular location is the cytoplasm. The enzyme catalyses N(6)-dimethylallyladenosine(37) in tRNA + (sulfur carrier)-SH + AH2 + 2 S-adenosyl-L-methionine = 2-methylsulfanyl-N(6)-dimethylallyladenosine(37) in tRNA + (sulfur carrier)-H + 5'-deoxyadenosine + L-methionine + A + S-adenosyl-L-homocysteine + 2 H(+). In terms of biological role, catalyzes the methylthiolation of N6-(dimethylallyl)adenosine (i(6)A), leading to the formation of 2-methylthio-N6-(dimethylallyl)adenosine (ms(2)i(6)A) at position 37 in tRNAs that read codons beginning with uridine. This chain is tRNA-2-methylthio-N(6)-dimethylallyladenosine synthase, found in Rhizobium johnstonii (strain DSM 114642 / LMG 32736 / 3841) (Rhizobium leguminosarum bv. viciae).